A 345-amino-acid chain; its full sequence is Heat-inducible transcription repressor HrcA (345 aa).

It belongs to the HrcA family.

Functionally, negative regulator of class I heat shock genes (grpE-dnaK-dnaJ and groELS operons). Prevents heat-shock induction of these operons. The protein is Heat-inducible transcription repressor HrcA of Dehalococcoides mccartyi (strain ATCC BAA-2266 / KCTC 15142 / 195) (Dehalococcoides ethenogenes (strain 195)).